We begin with the raw amino-acid sequence, 90 residues long: Barrier-to-autointegration factor-like protein (90 aa).

This sequence belongs to the BAF family. In terms of assembly, homodimer. Heterodimerizes with BANF1. In terms of tissue distribution, expressed strongly in testis and pancreas. Also detected in brain, colon, liver, lung, ovary, placenta, prostate, small intestine, spleen and thymus. Not detected in heart, kidney and skeletal muscle.

The protein localises to the nucleus. The protein resides in the cytoplasm. Its function is as follows. May play a role in BANF1 regulation and influence tissue-specific roles of BANF1. This is Barrier-to-autointegration factor-like protein (BANF2) from Homo sapiens (Human).